The following is a 227-amino-acid chain: MMVSLFSQFDSPWLLNIPLVLLALIMPWKLFVSFGPSWAGTRSSRLVYATMETLMSQVMQPLNKLGFRWVVLFSSLMLMLMTLNVIGLFPYTFTPTTQLSMNLGLAVPLWLGTVVYGFRNHPVIALAHLCPEGAPNLLVPVLVVVETLSILMRPLALGLRLTANLTAGHLLMHLISSAVLGLMELSVMLSGITLLLLVFLTMLEIAVALIQGYVFAILVTLYLDENL.

6 helical membrane passes run 14–34, 69–89, 98–118, 137–157, 169–189, and 205–223; these read LLNI…FVSF, WVVL…IGLF, QLSM…VYGF, LLVP…PLAL, HLLM…SVML, and IAVA…TLYL.

Belongs to the ATPase A chain family. In terms of assembly, F-type ATPases have 2 components, CF(1) - the catalytic core - and CF(0) - the membrane proton channel. CF(1) has five subunits: alpha(3), beta(3), gamma(1), delta(1), epsilon(1). CF(0) has three main subunits: a, b and c.

Its subcellular location is the mitochondrion inner membrane. Its function is as follows. Mitochondrial membrane ATP synthase (F(1)F(0) ATP synthase or Complex V) produces ATP from ADP in the presence of a proton gradient across the membrane which is generated by electron transport complexes of the respiratory chain. F-type ATPases consist of two structural domains, F(1) - containing the extramembraneous catalytic core and F(0) - containing the membrane proton channel, linked together by a central stalk and a peripheral stalk. During catalysis, ATP synthesis in the catalytic domain of F(1) is coupled via a rotary mechanism of the central stalk subunits to proton translocation. Key component of the proton channel; it may play a direct role in the translocation of protons across the membrane. The sequence is that of ATP synthase subunit a (ATP6) from Branchiostoma floridae (Florida lancelet).